A 189-amino-acid polypeptide reads, in one-letter code: Large ribosomal subunit protein bL9 (189 aa).

The protein belongs to the bacterial ribosomal protein bL9 family.

Binds to the 23S rRNA. The protein is Large ribosomal subunit protein bL9 of Brucella ovis (strain ATCC 25840 / 63/290 / NCTC 10512).